A 119-amino-acid chain; its full sequence is Small ribosomal subunit protein uS13 (119 aa).

A disordered region spans residues 96–119 (PVRGQRTKTNARTRKGPRKLIKSR).

It belongs to the universal ribosomal protein uS13 family. In terms of assembly, part of the 30S ribosomal subunit. Forms a loose heterodimer with protein S19. Forms two bridges to the 50S subunit in the 70S ribosome.

In terms of biological role, located at the top of the head of the 30S subunit, it contacts several helices of the 16S rRNA. In the 70S ribosome it contacts the 23S rRNA (bridge B1a) and protein L5 of the 50S subunit (bridge B1b), connecting the 2 subunits; these bridges are implicated in subunit movement. Contacts the tRNAs in the A and P-sites. In Buchnera aphidicola subsp. Cinara cedri (strain Cc), this protein is Small ribosomal subunit protein uS13.